An 83-amino-acid polypeptide reads, in one-letter code: Large ribosomal subunit protein eL31 (83 aa).

Belongs to the eukaryotic ribosomal protein eL31 family.

This is Large ribosomal subunit protein eL31 from Methanococcus maripaludis (strain DSM 14266 / JCM 13030 / NBRC 101832 / S2 / LL).